The chain runs to 65 residues: MKRPVVNCPQCGKSVAWDNSNPFRPFCSERCKLIDLGQWATESYRIPDTGKDSEKQENDPSGSEK.

C8, C11, C27, and C31 together coordinate Zn(2+). Residues 43–65 (SYRIPDTGKDSEKQENDPSGSEK) form a disordered region. Over residues 48-65 (DTGKDSEKQENDPSGSEK) the composition is skewed to basic and acidic residues.

The protein belongs to the DNA gyrase inhibitor YacG family. In terms of assembly, interacts with GyrB. Requires Zn(2+) as cofactor.

In terms of biological role, inhibits all the catalytic activities of DNA gyrase by preventing its interaction with DNA. Acts by binding directly to the C-terminal domain of GyrB, which probably disrupts DNA binding by the gyrase. The chain is DNA gyrase inhibitor YacG from Nitrosospira multiformis (strain ATCC 25196 / NCIMB 11849 / C 71).